Here is a 146-residue protein sequence, read N- to C-terminus: 3-hydroxyacyl-[acyl-carrier-protein] dehydratase FabZ (146 aa).

His-46 is an active-site residue.

It belongs to the thioester dehydratase family. FabZ subfamily.

The protein resides in the cytoplasm. It carries out the reaction a (3R)-hydroxyacyl-[ACP] = a (2E)-enoyl-[ACP] + H2O. Involved in unsaturated fatty acids biosynthesis. Catalyzes the dehydration of short chain beta-hydroxyacyl-ACPs and long chain saturated and unsaturated beta-hydroxyacyl-ACPs. The protein is 3-hydroxyacyl-[acyl-carrier-protein] dehydratase FabZ of Acinetobacter baumannii (strain ATCC 17978 / DSM 105126 / CIP 53.77 / LMG 1025 / NCDC KC755 / 5377).